Consider the following 260-residue polypeptide: tRNA (guanine-N(1)-)-methyltransferase (260 aa).

S-adenosyl-L-methionine is bound by residues G117 and 137–142 (LGDFVL).

Belongs to the RNA methyltransferase TrmD family. As to quaternary structure, homodimer.

It is found in the cytoplasm. The catalysed reaction is guanosine(37) in tRNA + S-adenosyl-L-methionine = N(1)-methylguanosine(37) in tRNA + S-adenosyl-L-homocysteine + H(+). In terms of biological role, specifically methylates guanosine-37 in various tRNAs. In Cupriavidus taiwanensis (strain DSM 17343 / BCRC 17206 / CCUG 44338 / CIP 107171 / LMG 19424 / R1) (Ralstonia taiwanensis (strain LMG 19424)), this protein is tRNA (guanine-N(1)-)-methyltransferase.